Consider the following 217-residue polypeptide: Response regulator RR06 (217 aa).

Residues 2–115 (NILVADDEEM…LLVKRIKALI (114 aa)) form the Response regulatory domain. Asp-51 is subject to 4-aspartylphosphate. Positions 122-217 (EDIWRYQDVT…VKNVGYKISL (96 aa)) form a DNA-binding region, ompR/PhoB-type.

In terms of processing, phosphorylated at threonine residues by StkP; threonine phosphorylation enhances RR06 binding to DNA and may also increase expression of CbpA. May be de-phosphorylated by PhpP.

In terms of biological role, member of the two-component regulatory system HK06/RR06 involved in regulation of target genes, including choline-binding protein CbpA. Binds to the promoter region of CbpA and directly activates transcription. This Streptococcus pneumoniae serotype 2 (strain D39 / NCTC 7466) protein is Response regulator RR06.